Reading from the N-terminus, the 61-residue chain is Small ribosomal subunit protein uS14B (61 aa).

Zn(2+) contacts are provided by C24, C27, C40, and C43.

It belongs to the universal ribosomal protein uS14 family. Zinc-binding uS14 subfamily. As to quaternary structure, part of the 30S ribosomal subunit. Contacts proteins S3 and S10. Requires Zn(2+) as cofactor.

Its function is as follows. Binds 16S rRNA, required for the assembly of 30S particles and may also be responsible for determining the conformation of the 16S rRNA at the A site. The polypeptide is Small ribosomal subunit protein uS14B (Mycobacterium ulcerans (strain Agy99)).